The following is a 718-amino-acid chain: Serine/threonine-protein kinase tousled-like 2 (718 aa).

The interval 24–85 (GVSKGPLNSE…KGTPRGHKIS (62 aa)) is disordered. Positions 29-44 (PLNSESSNQSLCSVGS) are enriched in polar residues. The span at 46–61 (SDKEVETPEKKQNDQR) shows a compositional bias: basic and acidic residues. Phosphoserine occurs at positions 73, 94, 99, and 102. A disordered region spans residues 147 to 176 (QQNSPSSTGSGNTEHSCSSQKQISIQHRQT). Positions 193 to 244 (NSDLEKKEGRIDDLLRANCDLRRQIDEQQKMLEKYKERLNRCVTMSKKLLIE) are required for interaction with TLK1 and DYNLL1/LC8. Coiled coils occupy residues 193–244 (NSDL…LLIE), 285–315 (AFQN…KRKP), and 349–397 (HEQE…DNSQ). The interval 310–337 (LAKRKPPAMGQAPPATNEQKQRKSKTNG) is disordered. The Protein kinase domain occupies 408 to 687 (YLLLHLLGRG…VQQLACDPYL (280 aa)). Residues 414 to 422 (LGRGGFSEV) and Lys437 contribute to the ATP site. The active-site Proton acceptor is the Asp538. Ser696 is subject to Phosphoserine; by CHEK1.

Belongs to the protein kinase superfamily. Ser/Thr protein kinase family. Monomer. May form homodimers; homodimerization may enhance autophosphoylation and enzymatic activity. Heterodimer with TLK1. Interacts with YWHAZ; association with 14-3-3 proteins such as YWHAZ regulates subcellular location. May also interact with FEZ1/LZTS1 and FEZ2. Interacts with CHD7 and CHD8. Interacts with DYNLL1/LC8. Mg(2+) serves as cofactor. Phosphorylated at Ser-696, probably by CHEK1. Post-translationally, autophosphorylated; phosphorylation promotes the assembly of higher order oligomers and enzymatic activity. As to expression, ubiquitously expressed in all tissues examined, with high levels in heart and testis, in particular the pachytene spermatocytes and in round spermatids. Some evidence for the existence of a testis-specific isoform suggesting a role in spermatogenesis.

It is found in the nucleus. Its subcellular location is the nucleoplasm. The protein resides in the cytoplasm. It localises to the perinuclear region. The protein localises to the cytoskeleton. The catalysed reaction is L-seryl-[protein] + ATP = O-phospho-L-seryl-[protein] + ADP + H(+). It carries out the reaction L-threonyl-[protein] + ATP = O-phospho-L-threonyl-[protein] + ADP + H(+). With respect to regulation, cell cycle-regulated, with maximal activity in the S-phase. Rapidly and transiently inhibited by phosphorylation following the generation of DNA double-stranded breaks during S-phase, probably by CHEK1, possibly at Ser-696. This inhibition is cell cycle checkpoint- and ATM-dependent. Functionally, serine/threonine-protein kinase involved in the process of chromatin assembly and probably also DNA replication, transcription, repair, and chromosome segregation. Phosphorylates the chromatin assembly factors ASF1A and ASF1B. Phosphorylation of ASF1A prevents its proteasome-mediated degradation, thereby enhancing chromatin assembly. Negative regulator of amino acid starvation-induced autophagy. Testis-specific isoforms may play a role in spermatogenesis. Highly expressed in embryos throughout development. This Mus musculus (Mouse) protein is Serine/threonine-protein kinase tousled-like 2 (Tlk2).